The chain runs to 248 residues: Ribonuclease HII (248 aa).

Residues 29–219 (DIVCGVDEAG…VREAHLRLGT (191 aa)) form the RNase H type-2 domain. The a divalent metal cation site is built by Asp35, Glu36, and Asp128.

This sequence belongs to the RNase HII family. The cofactor is Mn(2+). It depends on Mg(2+) as a cofactor.

It is found in the cytoplasm. It catalyses the reaction Endonucleolytic cleavage to 5'-phosphomonoester.. Endonuclease that specifically degrades the RNA of RNA-DNA hybrids. In Paraburkholderia xenovorans (strain LB400), this protein is Ribonuclease HII.